The sequence spans 480 residues: Speriolin (480 aa).

Positions 1-76 (MSLLTSYEGL…HQGVFLPPAS (76 aa)) are necessary for targeting to centrosomes. A coiled-coil region spans residues 2–45 (SLLTSYEGLRHQIERLVRENEELKKLVRLIRENQELKSAIKTQA). Disordered stretches follow at residues 252 to 297 (INNI…SRVM) and 305 to 324 (VEME…DNPR).

This sequence belongs to the speriolin family. Found in a complex with CDC20, CDC27 and TUBG1. Interacts with CDC20. As to expression, expressed in testis. Expressed in pachyten spermatocytes, spermatids and epididymal sperm (at protein level).

The protein localises to the cytoplasm. It is found in the cytoskeleton. It localises to the microtubule organizing center. The protein resides in the centrosome. The sequence is that of Speriolin (Spatc1) from Mus musculus (Mouse).